The primary structure comprises 338 residues: Putative clathrin assembly protein At5g10410 (338 aa).

Positions 27–157 (FGSTAVKYIH…WVPKVLGSFP (131 aa)) constitute an ENTH domain.

The protein localises to the membrane. The protein resides in the clathrin-coated pit. It localises to the golgi apparatus. It is found in the cytoplasmic vesicle. Its subcellular location is the clathrin-coated vesicle. This is Putative clathrin assembly protein At5g10410 from Arabidopsis thaliana (Mouse-ear cress).